We begin with the raw amino-acid sequence, 179 residues long: MYEYLDRRYALALYEVAEENNKVDEYLRDLKEVVNIIKNSEDICKILKHPEINTSRKKEIFTELFKDKVDDKILSFLLVLIEKDRILYLEEKLKEMEKIYLEKNNMILANVKTVIPLLKEEREELIEKLGNKYNKKIILEEEIDKSIIGGVYVRVGDDVLDGTLSTRLKDIKKMMLKRE.

Belongs to the ATPase delta chain family. As to quaternary structure, F-type ATPases have 2 components, F(1) - the catalytic core - and F(0) - the membrane proton channel. F(1) has five subunits: alpha(3), beta(3), gamma(1), delta(1), epsilon(1). F(0) has three main subunits: a(1), b(2) and c(10-14). The alpha and beta chains form an alternating ring which encloses part of the gamma chain. F(1) is attached to F(0) by a central stalk formed by the gamma and epsilon chains, while a peripheral stalk is formed by the delta and b chains.

Its subcellular location is the cell membrane. Its function is as follows. F(1)F(0) ATP synthase produces ATP from ADP in the presence of a proton or sodium gradient. F-type ATPases consist of two structural domains, F(1) containing the extramembraneous catalytic core and F(0) containing the membrane proton channel, linked together by a central stalk and a peripheral stalk. During catalysis, ATP synthesis in the catalytic domain of F(1) is coupled via a rotary mechanism of the central stalk subunits to proton translocation. In terms of biological role, this protein is part of the stalk that links CF(0) to CF(1). It either transmits conformational changes from CF(0) to CF(1) or is implicated in proton conduction. The chain is ATP synthase subunit delta from Clostridium botulinum (strain Okra / Type B1).